The following is a 34-amino-acid chain: Delta-conotoxin AtVIA (34 aa).

The propeptide occupies 1–4 (LSKK). Q5 carries the post-translational modification Pyrrolidone carboxylic acid. Disulfide bonds link C6/C23, C13/C27, and C22/C31.

Expressed by the venom duct.

The protein localises to the secreted. Functionally, probable toxin from a worm-hunter cone snail. Shows an excitatory activity on a majority of mouse lumbar dorsal root ganglion (DRG) neurons. Very probably inhibits the inactivation of voltage-gated sodium channels (Nav). This chain is Delta-conotoxin AtVIA, found in Conus ateralbus (Cone snail).